The primary structure comprises 293 residues: Thiamine-monophosphate kinase (293 aa).

5 residues coordinate Mg(2+): glutamate 25, valine 39, aspartate 40, aspartate 68, and aspartate 113. ATP-binding positions include glycine 112 to aspartate 113 and arginine 136. Aspartate 194 provides a ligand contact to Mg(2+). Position 196 (serine 196) interacts with ATP. Position 197 (aspartate 197) interacts with Mg(2+). Residues glutamate 243 and tryptophan 286 each coordinate substrate.

Belongs to the thiamine-monophosphate kinase family. In terms of assembly, homodimer.

The catalysed reaction is thiamine phosphate + ATP = thiamine diphosphate + ADP. Its pathway is cofactor biosynthesis; thiamine diphosphate biosynthesis; thiamine diphosphate from thiamine phosphate: step 1/1. With respect to regulation, is inhibited by AMP; the mode of AMP inhibition is uncompetitive for both TMP and ATP. In terms of biological role, catalyzes the ATP-dependent phosphorylation of thiamine-monophosphate (TMP) to form thiamine-pyrophosphate (TPP), the active form of vitamin B1. The protein is Thiamine-monophosphate kinase of Pyrobaculum calidifontis (strain DSM 21063 / JCM 11548 / VA1).